The sequence spans 426 residues: UDP-N-acetylglucosamine--N-acetylmuramyl-(pentapeptide) pyrophosphoryl-undecaprenol N-acetylglucosamine transferase (426 aa).

Residues 28–30, N140, R176, S204, I257, and Q302 contribute to the UDP-N-acetyl-alpha-D-glucosamine site; that span reads TGG. Residues 369–388 are disordered; sequence AGNGPSGMGNGHSSEQPQER.

The protein belongs to the glycosyltransferase 28 family. MurG subfamily.

It is found in the cell inner membrane. The enzyme catalyses di-trans,octa-cis-undecaprenyl diphospho-N-acetyl-alpha-D-muramoyl-L-alanyl-D-glutamyl-meso-2,6-diaminopimeloyl-D-alanyl-D-alanine + UDP-N-acetyl-alpha-D-glucosamine = di-trans,octa-cis-undecaprenyl diphospho-[N-acetyl-alpha-D-glucosaminyl-(1-&gt;4)]-N-acetyl-alpha-D-muramoyl-L-alanyl-D-glutamyl-meso-2,6-diaminopimeloyl-D-alanyl-D-alanine + UDP + H(+). It participates in cell wall biogenesis; peptidoglycan biosynthesis. Functionally, cell wall formation. Catalyzes the transfer of a GlcNAc subunit on undecaprenyl-pyrophosphoryl-MurNAc-pentapeptide (lipid intermediate I) to form undecaprenyl-pyrophosphoryl-MurNAc-(pentapeptide)GlcNAc (lipid intermediate II). The sequence is that of UDP-N-acetylglucosamine--N-acetylmuramyl-(pentapeptide) pyrophosphoryl-undecaprenol N-acetylglucosamine transferase from Xanthomonas axonopodis pv. citri (strain 306).